We begin with the raw amino-acid sequence, 70 residues long: Probable ferredoxin TA0517 (70 aa).

2 consecutive 4Fe-4S ferredoxin-type domains span residues 8 to 36 (TEMDVDRNLCNYCGACVGMCPTDAIWLDE) and 37 to 66 (TVIKIHEEKCIECGFCIVGCPTGAITAEWF). Residues cysteine 17, cysteine 20, cysteine 23, cysteine 27, cysteine 46, cysteine 49, cysteine 52, and cysteine 56 each contribute to the [4Fe-4S] cluster site.

[4Fe-4S] cluster is required as a cofactor.

Its function is as follows. Ferredoxins are iron-sulfur proteins that transfer electrons in a wide variety of metabolic reactions. In Thermoplasma acidophilum (strain ATCC 25905 / DSM 1728 / JCM 9062 / NBRC 15155 / AMRC-C165), this protein is Probable ferredoxin TA0517.